The following is a 449-amino-acid chain: Bifunctional protein GlmU (449 aa).

The tract at residues 1 to 229 (MKLSAVILAA…EEDIYGINDR (229 aa)) is pyrophosphorylase. Residues 8 to 11 (LAAG), K22, Q73, and 78 to 79 (GT) contribute to the UDP-N-acetyl-alpha-D-glucosamine site. Residue D102 participates in Mg(2+) binding. Residues G139, E154, N169, and N227 each contribute to the UDP-N-acetyl-alpha-D-glucosamine site. Residue N227 coordinates Mg(2+). The segment at 230–250 (VQLAQAENILRQRKNRELMLS) is linker. Positions 251 to 449 (GVSLMDPAST…AGQKHLPRKG (199 aa)) are N-acetyltransferase. Positions 332 and 350 each coordinate UDP-N-acetyl-alpha-D-glucosamine. Residue H362 is the Proton acceptor of the active site. Residues Y365 and N376 each coordinate UDP-N-acetyl-alpha-D-glucosamine. Acetyl-CoA is bound by residues A379, 385-386 (NY), S404, A422, and R439.

This sequence in the N-terminal section; belongs to the N-acetylglucosamine-1-phosphate uridyltransferase family. It in the C-terminal section; belongs to the transferase hexapeptide repeat family. As to quaternary structure, homotrimer. The cofactor is Mg(2+).

It localises to the cytoplasm. It carries out the reaction alpha-D-glucosamine 1-phosphate + acetyl-CoA = N-acetyl-alpha-D-glucosamine 1-phosphate + CoA + H(+). It catalyses the reaction N-acetyl-alpha-D-glucosamine 1-phosphate + UTP + H(+) = UDP-N-acetyl-alpha-D-glucosamine + diphosphate. Its pathway is nucleotide-sugar biosynthesis; UDP-N-acetyl-alpha-D-glucosamine biosynthesis; N-acetyl-alpha-D-glucosamine 1-phosphate from alpha-D-glucosamine 6-phosphate (route II): step 2/2. It participates in nucleotide-sugar biosynthesis; UDP-N-acetyl-alpha-D-glucosamine biosynthesis; UDP-N-acetyl-alpha-D-glucosamine from N-acetyl-alpha-D-glucosamine 1-phosphate: step 1/1. The protein operates within bacterial outer membrane biogenesis; LPS lipid A biosynthesis. In terms of biological role, catalyzes the last two sequential reactions in the de novo biosynthetic pathway for UDP-N-acetylglucosamine (UDP-GlcNAc). The C-terminal domain catalyzes the transfer of acetyl group from acetyl coenzyme A to glucosamine-1-phosphate (GlcN-1-P) to produce N-acetylglucosamine-1-phosphate (GlcNAc-1-P), which is converted into UDP-GlcNAc by the transfer of uridine 5-monophosphate (from uridine 5-triphosphate), a reaction catalyzed by the N-terminal domain. This Syntrophomonas wolfei subsp. wolfei (strain DSM 2245B / Goettingen) protein is Bifunctional protein GlmU.